Here is a 760-residue protein sequence, read N- to C-terminus: MKTWVKIVFGVATSAVLALLVMCIVLRPSRVHNSEENTMRALTLKDILNGTFSYKTFFPNWISGQEYLHQSADNNIVLYNIETGQSYTILSNRTMKSVNASNYGLSPDRQFVYLESDYSKLWRYSYTATYYIYDLSNGEFVRGNELPRPIQYLCWSPVGSKLAYVYQNNIYLKQRPGDPPFQITFNGRENKIFNGIPDWVYEEEMLATKYALWWSPNGKFLAYAEFNDTDIPVIAYSYYGDEQYPRTINIPYPKAGAKNPVVRIFIIDTTYPAYVGPQEVPVPAMIASSDYYFSWLTWVTDERVCLQWLKRVQNVSVLSICDFREDWQTWDCPKTQEHIEESRTGWAGGFFVSTPVFSYDAISYYKIFSDKDGYKHIHYIKDTVENAIQITSGKWEAINIFRVTQDSLFYSSNEFEEYPGRRNIYRISIGSYPPSKKCVTCHLRKERCQYYTASFSDYAKYYALVCYGPGIPISTLHDGRTDQEIKILEENKELENALKNIQLPKEEIKKLEVDEITLWYKMILPPQFDRSKKYPLLIQVYGGPCSQSVRSVFAVNWISYLASKEGMVIALVDGRGTAFQGDKLLYAVYRKLGVYEVEDQITAVRKFIEMGFIDEKRIAIWGWSYGGYVSSLALASGTGLFKCGIAVAPVSSWEYYASVYTERFMGLPTKDDNLEHYKNSTVMARAEYFRNVDYLLIHGTADDNVHFQNSAQIAKALVNAQVDFQAMWYSDQNHGLSGLSTNHLYTHMTHFLKQCFSLSD.

At 1-4 the chain is on the cytoplasmic side; that stretch reads MKTW. A helical; Signal-anchor for type II membrane protein membrane pass occupies residues 5-25; the sequence is VKIVFGVATSAVLALLVMCIV. Topologically, residues 26–760 are extracellular; sequence LRPSRVHNSE…FLKQCFSLSD (735 aa). N-linked (GlcNAc...) asparagine glycans are attached at residues N49, N92, and N99. The substrate site is built by E203 and E204. N-linked (GlcNAc...) asparagine glycosylation is found at N227 and N314. Intrachain disulfides connect C321-C332, C438-C441, and C448-C466. Catalysis depends on S624, which acts as the Charge relay system. C643 and C755 form a disulfide bridge. N679 carries an N-linked (GlcNAc...) asparagine glycan. Residues D702 and H734 each act as charge relay system in the active site.

This sequence belongs to the peptidase S9B family. As to quaternary structure, homodimer; homodimerization is required for activity of both plasma membrane and soluble forms. The monomer is inactive. Heterodimer with DPP4. Interacts with PLAUR; the interaction occurs at the cell surface of invadopodia membranes. Interacts with ITGB1. Interacts with ITGA3. Associates with integrin alpha-3/beta-1; the association occurs in a collagen-dependent manner at the cell surface of invadopodia membranes. N-glycosylated. Post-translationally, the N-terminus may be blocked. As to expression, expressed in adipose tissue. Expressed in the dermal fibroblasts in the fetal skin. Expressed in the granulation tissue of healing wounds and on reactive stromal fibroblast in epithelial cancers. Expressed in activated fibroblast-like synoviocytes from inflamed synovial tissues. Expressed in activated hepatic stellate cells (HSC) and myofibroblasts from cirrhotic liver, but not detected in normal liver. Expressed in glioma cells (at protein level). Expressed in glioblastomas and glioma cells. Isoform 1 and isoform 2 are expressed in melanoma, carcinoma and fibroblast cell lines.

Its subcellular location is the cell surface. The protein resides in the cell membrane. The protein localises to the cell projection. It localises to the lamellipodium membrane. It is found in the invadopodium membrane. Its subcellular location is the ruffle membrane. The protein resides in the membrane. The protein localises to the secreted. It localises to the cytoplasm. The catalysed reaction is Hydrolysis of Pro-|-Xaa &gt;&gt; Ala-|-Xaa in oligopeptides.. It carries out the reaction Release of an N-terminal dipeptide, Xaa-Yaa-|-Zaa-, from a polypeptide, preferentially when Yaa is Pro, provided Zaa is neither Pro nor hydroxyproline.. Its activity is regulated as follows. Gelatinase activity is inhibited by serine-protease inhibitors, such as phenylmethylsulfonyl fluoride (PMSF), 4-(2-aminoethyl)-benzenesulfonyl fluoride hydrochloride (AEBSF), 4-amidino phenylsulfonyl fluoride (APSF) and diisopropyl fluorophosphate (DFP), N-ethylmaleimide (NEM) and phenylmethylsulfonyl fluoride (PMSF). Dipeptidyl peptidase activity is inhibited by 2,2'-azino-bis(3-ethylbenzthiazoline-6-sulfonic acid), diisopropylfluorophosphate (DFP). Prolyl endopeptidase activity is inhibited by the boronic acid peptide Ac-Gly-BoroPro, Ac-Gly-Pro-chloromethyl ketone and Thr-Ser-Gly-chloromethyl ketone. Functionally, cell surface glycoprotein serine protease that participates in extracellular matrix degradation and involved in many cellular processes including tissue remodeling, fibrosis, wound healing, inflammation and tumor growth. Both plasma membrane and soluble forms exhibit post-proline cleaving endopeptidase activity, with a marked preference for Ala/Ser-Gly-Pro-Ser/Asn/Ala consensus sequences, on substrate such as alpha-2-antiplasmin SERPINF2 and SPRY2. Degrade also gelatin, heat-denatured type I collagen, but not native collagen type I and IV, vitronectin, tenascin, laminin, fibronectin, fibrin or casein. Also has dipeptidyl peptidase activity, exhibiting the ability to hydrolyze the prolyl bond two residues from the N-terminus of synthetic dipeptide substrates provided that the penultimate residue is proline, with a preference for Ala-Pro, Ile-Pro, Gly-Pro, Arg-Pro and Pro-Pro. Natural neuropeptide hormones for dipeptidyl peptidase are the neuropeptide Y (NPY), peptide YY (PYY), substance P (TAC1) and brain natriuretic peptide 32 (NPPB). The plasma membrane form, in association with either DPP4, PLAUR or integrins, is involved in the pericellular proteolysis of the extracellular matrix (ECM), and hence promotes cell adhesion, migration and invasion through the ECM. Plays a role in tissue remodeling during development and wound healing. Participates in the cell invasiveness towards the ECM in malignant melanoma cancers. Enhances tumor growth progression by increasing angiogenesis, collagen fiber degradation and apoptosis and by reducing antitumor response of the immune system. Promotes glioma cell invasion through the brain parenchyma by degrading the proteoglycan brevican. Acts as a tumor suppressor in melanocytic cells through regulation of cell proliferation and survival in a serine protease activity-independent manner. The polypeptide is Prolyl endopeptidase FAP (Homo sapiens (Human)).